The primary structure comprises 273 residues: tRNA (guanine-N(7)-)-methyltransferase (273 aa).

The interval Met1–Val32 is disordered. S-adenosyl-L-methionine is bound by residues Gly88, Glu111–Ile112, Asn150–Cys151, and Cys170. The active site involves Asp173. Residue Thr248–Glu250 coordinates S-adenosyl-L-methionine.

Belongs to the class I-like SAM-binding methyltransferase superfamily. TrmB family. Forms a complex with trm82.

The protein resides in the nucleus. It catalyses the reaction guanosine(46) in tRNA + S-adenosyl-L-methionine = N(7)-methylguanosine(46) in tRNA + S-adenosyl-L-homocysteine. It participates in tRNA modification; N(7)-methylguanine-tRNA biosynthesis. In terms of biological role, catalyzes the formation of N(7)-methylguanine at position 46 (m7G46) in tRNA. This chain is tRNA (guanine-N(7)-)-methyltransferase (trm8), found in Schizosaccharomyces pombe (strain 972 / ATCC 24843) (Fission yeast).